The following is a 102-amino-acid chain: Malonate decarboxylase acyl carrier protein (102 aa).

Ser-27 is subject to O-(phosphoribosyl dephospho-coenzyme A)serine.

The protein belongs to the MdcC family. Covalently binds the prosthetic group of malonate decarboxylase.

The protein resides in the cytoplasm. Functionally, subunit of malonate decarboxylase, it is an acyl carrier protein to which acetyl and malonyl thioester residues are bound via a 2'-(5''-phosphoribosyl)-3'-dephospho-CoA prosthetic group and turn over during the catalytic mechanism. This is Malonate decarboxylase acyl carrier protein from Acinetobacter calcoaceticus.